The following is a 262-amino-acid chain: Ribosomal RNA small subunit methyltransferase A (262 aa).

The S-adenosyl-L-methionine site is built by His-13, Leu-15, Gly-40, Glu-61, Asp-85, and Asn-103.

Belongs to the class I-like SAM-binding methyltransferase superfamily. rRNA adenine N(6)-methyltransferase family. RsmA subfamily.

Its subcellular location is the cytoplasm. It catalyses the reaction adenosine(1518)/adenosine(1519) in 16S rRNA + 4 S-adenosyl-L-methionine = N(6)-dimethyladenosine(1518)/N(6)-dimethyladenosine(1519) in 16S rRNA + 4 S-adenosyl-L-homocysteine + 4 H(+). Its function is as follows. Specifically dimethylates two adjacent adenosines (A1518 and A1519) in the loop of a conserved hairpin near the 3'-end of 16S rRNA in the 30S particle. May play a critical role in biogenesis of 30S subunits. This is Ribosomal RNA small subunit methyltransferase A from Bordetella petrii (strain ATCC BAA-461 / DSM 12804 / CCUG 43448).